A 164-amino-acid polypeptide reads, in one-letter code: ATP synthase subunit b 1 (164 aa).

The chain crosses the membrane as a helical span at residues 8–28; that stretch reads PETWVAIAFVILMGLFAYLGV.

Belongs to the ATPase B chain family. In terms of assembly, F-type ATPases have 2 components, F(1) - the catalytic core - and F(0) - the membrane proton channel. F(1) has five subunits: alpha(3), beta(3), gamma(1), delta(1), epsilon(1). F(0) has three main subunits: a(1), b(2) and c(10-14). The alpha and beta chains form an alternating ring which encloses part of the gamma chain. F(1) is attached to F(0) by a central stalk formed by the gamma and epsilon chains, while a peripheral stalk is formed by the delta and b chains.

The protein localises to the cell inner membrane. Its function is as follows. F(1)F(0) ATP synthase produces ATP from ADP in the presence of a proton or sodium gradient. F-type ATPases consist of two structural domains, F(1) containing the extramembraneous catalytic core and F(0) containing the membrane proton channel, linked together by a central stalk and a peripheral stalk. During catalysis, ATP synthesis in the catalytic domain of F(1) is coupled via a rotary mechanism of the central stalk subunits to proton translocation. In terms of biological role, component of the F(0) channel, it forms part of the peripheral stalk, linking F(1) to F(0). This Bradyrhizobium sp. (strain ORS 278) protein is ATP synthase subunit b 1.